The primary structure comprises 360 residues: Pyrimidine monooxygenase RutA (360 aa).

FMN is bound by residues 49–50, N115, E124, 140–141, and S190; these read IK and RY.

This sequence belongs to the NtaA/SnaA/DszA monooxygenase family. RutA subfamily.

It carries out the reaction uracil + FMNH2 + NADH + O2 = (Z)-3-ureidoacrylate + FMN + NAD(+) + H2O + H(+). It catalyses the reaction thymine + FMNH2 + NADH + O2 = (Z)-2-methylureidoacrylate + FMN + NAD(+) + H2O + H(+). Its function is as follows. Catalyzes the pyrimidine ring opening between N-3 and C-4 by an unusual flavin hydroperoxide-catalyzed mechanism, adding oxygen atoms in the process to yield ureidoacrylate peracid, that immediately reacts with FMN forming ureidoacrylate and FMN-N(5)-oxide. The FMN-N(5)-oxide reacts spontaneously with NADH to produce FMN. Requires the flavin reductase RutF to regenerate FMN in vivo. The protein is Pyrimidine monooxygenase RutA of Pseudomonas savastanoi pv. phaseolicola (strain 1448A / Race 6) (Pseudomonas syringae pv. phaseolicola (strain 1448A / Race 6)).